The following is a 199-amino-acid chain: NAD(P)H dehydrogenase (quinone) (199 aa).

Positions 4 to 190 (VLVLYYSAYG…DAARFQGAHV (187 aa)) constitute a Flavodoxin-like domain. FMN-binding positions include 10–15 (SAYGHI) and 78–80 (TRY). Tyrosine 12 contacts NAD(+). Residue tryptophan 98 coordinates substrate. Residues 113–119 (SSATQHG) and histidine 134 each bind FMN.

It belongs to the WrbA family. It depends on FMN as a cofactor.

The catalysed reaction is a quinone + NADH + H(+) = a quinol + NAD(+). It catalyses the reaction a quinone + NADPH + H(+) = a quinol + NADP(+). This is NAD(P)H dehydrogenase (quinone) from Sinorhizobium fredii (strain NBRC 101917 / NGR234).